The primary structure comprises 663 residues: DNA ligase (663 aa).

NAD(+)-binding positions include 31–35 (DSEYD), 80–81 (SL), and E109. The N6-AMP-lysine intermediate role is filled by K111. Residues R132, E166, K282, and K306 each contribute to the NAD(+) site. Zn(2+)-binding residues include C400, C403, C418, and C423. Positions 585–663 (ELHPVFGEKT…EQMMVDALRN (79 aa)) constitute a BRCT domain.

This sequence belongs to the NAD-dependent DNA ligase family. LigA subfamily. Requires Mg(2+) as cofactor. It depends on Mn(2+) as a cofactor.

The enzyme catalyses NAD(+) + (deoxyribonucleotide)n-3'-hydroxyl + 5'-phospho-(deoxyribonucleotide)m = (deoxyribonucleotide)n+m + AMP + beta-nicotinamide D-nucleotide.. In terms of biological role, DNA ligase that catalyzes the formation of phosphodiester linkages between 5'-phosphoryl and 3'-hydroxyl groups in double-stranded DNA using NAD as a coenzyme and as the energy source for the reaction. It is essential for DNA replication and repair of damaged DNA. This Macrococcus caseolyticus (strain JCSC5402) (Macrococcoides caseolyticum) protein is DNA ligase.